Reading from the N-terminus, the 214-residue chain is MTDSITIALSKGRILEETLPLLAEAGIELVDDVKKSRKLVFPTTDPNVRILIIRATDVPTYVQYGGADLGVTGKDVLMEHGGDGLYEPLDLNISRCRLMTAGKKGEQPPAGRIRVATKFVNLARRYYAAQGRQADIIKLYGAMELAPILNLADEIVDIVDTGNTLKANGLEPRELIDHISSRLVVNRASMKMKHGQINPIIEKMSAAVERRRDS.

It belongs to the ATP phosphoribosyltransferase family. Short subfamily. In terms of assembly, heteromultimer composed of HisG and HisZ subunits.

The protein localises to the cytoplasm. The catalysed reaction is 1-(5-phospho-beta-D-ribosyl)-ATP + diphosphate = 5-phospho-alpha-D-ribose 1-diphosphate + ATP. It participates in amino-acid biosynthesis; L-histidine biosynthesis; L-histidine from 5-phospho-alpha-D-ribose 1-diphosphate: step 1/9. In terms of biological role, catalyzes the condensation of ATP and 5-phosphoribose 1-diphosphate to form N'-(5'-phosphoribosyl)-ATP (PR-ATP). Has a crucial role in the pathway because the rate of histidine biosynthesis seems to be controlled primarily by regulation of HisG enzymatic activity. This is ATP phosphoribosyltransferase from Marinobacter nauticus (strain ATCC 700491 / DSM 11845 / VT8) (Marinobacter aquaeolei).